The chain runs to 97 residues: Putative membrane protein insertion efficiency factor (97 aa).

The interval 68-97 (VPGTELNTAPRSGQACNPTESTHSTTQTRH) is disordered. The segment covering 72 to 97 (ELNTAPRSGQACNPTESTHSTTQTRH) has biased composition (polar residues).

This sequence belongs to the UPF0161 family.

The protein localises to the cell inner membrane. In terms of biological role, could be involved in insertion of integral membrane proteins into the membrane. This chain is Putative membrane protein insertion efficiency factor, found in Marinobacter nauticus (strain ATCC 700491 / DSM 11845 / VT8) (Marinobacter aquaeolei).